We begin with the raw amino-acid sequence, 634 residues long: 1-deoxy-D-xylulose-5-phosphate synthase (634 aa).

Thiamine diphosphate contacts are provided by residues His-79 and 120–122 (GHA). Asp-151 lines the Mg(2+) pocket. Residues 152 to 153 (GS), Asn-180, Tyr-292, and Glu-376 each bind thiamine diphosphate. Asn-180 provides a ligand contact to Mg(2+).

Belongs to the transketolase family. DXPS subfamily. In terms of assembly, homodimer. Mg(2+) serves as cofactor. Thiamine diphosphate is required as a cofactor.

The catalysed reaction is D-glyceraldehyde 3-phosphate + pyruvate + H(+) = 1-deoxy-D-xylulose 5-phosphate + CO2. It functions in the pathway metabolic intermediate biosynthesis; 1-deoxy-D-xylulose 5-phosphate biosynthesis; 1-deoxy-D-xylulose 5-phosphate from D-glyceraldehyde 3-phosphate and pyruvate: step 1/1. Catalyzes the acyloin condensation reaction between C atoms 2 and 3 of pyruvate and glyceraldehyde 3-phosphate to yield 1-deoxy-D-xylulose-5-phosphate (DXP). The sequence is that of 1-deoxy-D-xylulose-5-phosphate synthase from Porphyromonas gingivalis (strain ATCC BAA-308 / W83).